The chain runs to 184 residues: Small ribosomal subunit protein uS4c (184 aa).

Positions 82–143 (MRLDNILFRL…KQRSKALIQN (62 aa)) constitute an S4 RNA-binding domain.

This sequence belongs to the universal ribosomal protein uS4 family. In terms of assembly, part of the 30S ribosomal subunit. Contacts protein S5. The interaction surface between S4 and S5 is involved in control of translational fidelity.

It is found in the plastid. The protein localises to the chloroplast. Functionally, one of the primary rRNA binding proteins, it binds directly to 16S rRNA where it nucleates assembly of the body of the 30S subunit. Its function is as follows. With S5 and S12 plays an important role in translational accuracy. This chain is Small ribosomal subunit protein uS4c (rps4), found in Patersonia fragilis (Short purple-flag).